The chain runs to 101 residues: Thiosulfate sulfurtransferase GlpE (101 aa).

One can recognise a Rhodanese domain in the interval 17 to 101 (EAKSVQIVDI…GFSAWHEANA (85 aa)). Catalysis depends on Cys65, which acts as the Cysteine persulfide intermediate.

This sequence belongs to the GlpE family.

The protein resides in the cytoplasm. It carries out the reaction thiosulfate + hydrogen cyanide = thiocyanate + sulfite + 2 H(+). The catalysed reaction is thiosulfate + [thioredoxin]-dithiol = [thioredoxin]-disulfide + hydrogen sulfide + sulfite + 2 H(+). In terms of biological role, transferase that catalyzes the transfer of sulfur from thiosulfate to thiophilic acceptors such as cyanide or dithiols. May function in a CysM-independent thiosulfate assimilation pathway by catalyzing the conversion of thiosulfate to sulfite, which can then be used for L-cysteine biosynthesis. The protein is Thiosulfate sulfurtransferase GlpE of Shewanella oneidensis (strain ATCC 700550 / JCM 31522 / CIP 106686 / LMG 19005 / NCIMB 14063 / MR-1).